Consider the following 186-residue polypeptide: Elongation factor P (186 aa).

It belongs to the elongation factor P family.

The protein localises to the cytoplasm. Its pathway is protein biosynthesis; polypeptide chain elongation. Involved in peptide bond synthesis. Stimulates efficient translation and peptide-bond synthesis on native or reconstituted 70S ribosomes in vitro. Probably functions indirectly by altering the affinity of the ribosome for aminoacyl-tRNA, thus increasing their reactivity as acceptors for peptidyl transferase. This Prochlorococcus marinus (strain MIT 9211) protein is Elongation factor P.